The chain runs to 233 residues: Sugar fermentation stimulation protein homolog (233 aa).

Belongs to the SfsA family.

The sequence is that of Sugar fermentation stimulation protein homolog from Rhodospirillum centenum (strain ATCC 51521 / SW).